A 156-amino-acid chain; its full sequence is Peptide methionine sulfoxide reductase MsrA (156 aa).

C10 is an active-site residue.

It belongs to the MsrA Met sulfoxide reductase family.

The enzyme catalyses L-methionyl-[protein] + [thioredoxin]-disulfide + H2O = L-methionyl-(S)-S-oxide-[protein] + [thioredoxin]-dithiol. It catalyses the reaction [thioredoxin]-disulfide + L-methionine + H2O = L-methionine (S)-S-oxide + [thioredoxin]-dithiol. Has an important function as a repair enzyme for proteins that have been inactivated by oxidation. Catalyzes the reversible oxidation-reduction of methionine sulfoxide in proteins to methionine. The polypeptide is Peptide methionine sulfoxide reductase MsrA (Acidobacterium capsulatum (strain ATCC 51196 / DSM 11244 / BCRC 80197 / JCM 7670 / NBRC 15755 / NCIMB 13165 / 161)).